A 313-amino-acid polypeptide reads, in one-letter code: Probable 5-dehydro-4-deoxyglucarate dehydratase (313 aa).

It belongs to the DapA family.

The catalysed reaction is 5-dehydro-4-deoxy-D-glucarate + H(+) = 2,5-dioxopentanoate + CO2 + H2O. It functions in the pathway carbohydrate acid metabolism; D-glucarate degradation; 2,5-dioxopentanoate from D-glucarate: step 2/2. In Bradyrhizobium sp. (strain BTAi1 / ATCC BAA-1182), this protein is Probable 5-dehydro-4-deoxyglucarate dehydratase.